The sequence spans 209 residues: Mitochondrial import inner membrane translocase subunit Tim23 (209 aa).

A run of 3 helical transmembrane segments spans residues 73-93 (FELA…FGAL), 125-145 (ALWA…GVIV), and 180-200 (GGLA…WEHI).

The protein belongs to the Tim17/Tim22/Tim23 family. As to quaternary structure, component of the TIM23 complex at least composed of timm23, timm17 and timm50. The complex interacts with the timm44 component of the PAM complex.

The protein resides in the mitochondrion inner membrane. Functionally, essential component of the TIM23 complex, a complex that mediates the translocation of transit peptide-containing proteins across the mitochondrial inner membrane. In Xenopus laevis (African clawed frog), this protein is Mitochondrial import inner membrane translocase subunit Tim23 (timm23).